We begin with the raw amino-acid sequence, 247 residues long: Sugar fermentation stimulation protein homolog (247 aa).

This sequence belongs to the SfsA family.

The sequence is that of Sugar fermentation stimulation protein homolog from Aeromonas hydrophila subsp. hydrophila (strain ATCC 7966 / DSM 30187 / BCRC 13018 / CCUG 14551 / JCM 1027 / KCTC 2358 / NCIMB 9240 / NCTC 8049).